Reading from the N-terminus, the 242-residue chain is Uridylate kinase (242 aa).

Lys17–Gly20 serves as a coordination point for ATP. Gly58 serves as a coordination point for UMP. Residues Gly59 and Arg63 each contribute to the ATP site. UMP contacts are provided by residues Asp78 and Met139 to Thr146. The ATP site is built by Phe172 and Asp175.

This sequence belongs to the UMP kinase family. In terms of assembly, homohexamer.

It is found in the cytoplasm. The catalysed reaction is UMP + ATP = UDP + ADP. Its pathway is pyrimidine metabolism; CTP biosynthesis via de novo pathway; UDP from UMP (UMPK route): step 1/1. Its activity is regulated as follows. Inhibited by UTP. Functionally, catalyzes the reversible phosphorylation of UMP to UDP. The chain is Uridylate kinase from Rhodococcus jostii (strain RHA1).